The chain runs to 290 residues: Inositol monophosphatase 2 (290 aa).

Mg(2+) is bound by residues glutamate 83, aspartate 103, isoleucine 105, and aspartate 106. Glutamate 83 is a binding site for substrate. Substrate-binding positions include 105-108 (IDGT), 207-209 (GSS), glutamine 226, and aspartate 233. Aspartate 233 is a binding site for Mg(2+).

It belongs to the inositol monophosphatase superfamily. In terms of assembly, homodimer. Mg(2+) serves as cofactor. In terms of tissue distribution, mostly expressed in brain, small intestine, heart, kidney, and spleen (at protein level).

The protein localises to the cytoplasm. The enzyme catalyses a myo-inositol phosphate + H2O = myo-inositol + phosphate. It carries out the reaction 1D-myo-inositol 1-phosphate + H2O = myo-inositol + phosphate. It catalyses the reaction 1D-myo-inositol 2-phosphate + H2O = myo-inositol + phosphate. The catalysed reaction is 1D-myo-inositol 3-phosphate + H2O = myo-inositol + phosphate. The enzyme catalyses 1D-myo-inositol 4-phosphate + H2O = myo-inositol + phosphate. It carries out the reaction 1D-myo-inositol 5-phosphate + H2O = myo-inositol + phosphate. It catalyses the reaction 1D-myo-inositol 6-phosphate + H2O = myo-inositol + phosphate. The catalysed reaction is alpha-D-glucose 1-phosphate + H2O = D-glucose + phosphate. The enzyme catalyses glycerol 2-phosphate + H2O = glycerol + phosphate. It carries out the reaction adenosine 2'-phosphate + H2O = adenosine + phosphate. It functions in the pathway polyol metabolism; myo-inositol biosynthesis; myo-inositol from D-glucose 6-phosphate: step 2/2. Phosphatase that can use myo-inositol monophosphates, myo-inositol 1,4-diphosphate, scyllo-inositol-1,4-diphosphate, glucose-1-phosphate, beta-glycerophosphate and 2'-AMP as substrates in vitro. No physiological substrates has been described yet. Has been implicated as the pharmacological target for lithium Li(+) action in brain. This chain is Inositol monophosphatase 2, found in Mus musculus (Mouse).